Consider the following 224-residue polypeptide: Lipoprotein-releasing system ATP-binding protein LolD (224 aa).

The ABC transporter domain maps to 4 to 224; the sequence is YTAKDISKNY…TLLDGSLQEE (221 aa). 40–47 is an ATP binding site; sequence GASGSGKT.

Belongs to the ABC transporter superfamily. Lipoprotein translocase (TC 3.A.1.125) family. In terms of assembly, the complex is composed of two ATP-binding proteins (LolD) and two transmembrane proteins (LolC and LolE).

Its subcellular location is the cell inner membrane. Functionally, part of the ABC transporter complex LolCDE involved in the translocation of mature outer membrane-directed lipoproteins, from the inner membrane to the periplasmic chaperone, LolA. Responsible for the formation of the LolA-lipoprotein complex in an ATP-dependent manner. In Desulfotalea psychrophila (strain LSv54 / DSM 12343), this protein is Lipoprotein-releasing system ATP-binding protein LolD.